The chain runs to 316 residues: 4-hydroxy-3-methylbut-2-enyl diphosphate reductase (316 aa).

C12 serves as a coordination point for [4Fe-4S] cluster. The (2E)-4-hydroxy-3-methylbut-2-enyl diphosphate site is built by H41 and H74. Residues H41 and H74 each contribute to the dimethylallyl diphosphate site. 2 residues coordinate isopentenyl diphosphate: H41 and H74. Residue C96 participates in [4Fe-4S] cluster binding. H124 provides a ligand contact to (2E)-4-hydroxy-3-methylbut-2-enyl diphosphate. H124 contributes to the dimethylallyl diphosphate binding site. H124 lines the isopentenyl diphosphate pocket. The active-site Proton donor is E126. A (2E)-4-hydroxy-3-methylbut-2-enyl diphosphate-binding site is contributed by T167. C197 is a binding site for [4Fe-4S] cluster. (2E)-4-hydroxy-3-methylbut-2-enyl diphosphate contacts are provided by S225, S226, N227, and S269. 4 residues coordinate dimethylallyl diphosphate: S225, S226, N227, and S269. The isopentenyl diphosphate site is built by S225, S226, N227, and S269.

It belongs to the IspH family. As to quaternary structure, homodimer. Requires [4Fe-4S] cluster as cofactor.

It catalyses the reaction isopentenyl diphosphate + 2 oxidized [2Fe-2S]-[ferredoxin] + H2O = (2E)-4-hydroxy-3-methylbut-2-enyl diphosphate + 2 reduced [2Fe-2S]-[ferredoxin] + 2 H(+). The enzyme catalyses dimethylallyl diphosphate + 2 oxidized [2Fe-2S]-[ferredoxin] + H2O = (2E)-4-hydroxy-3-methylbut-2-enyl diphosphate + 2 reduced [2Fe-2S]-[ferredoxin] + 2 H(+). It functions in the pathway isoprenoid biosynthesis; dimethylallyl diphosphate biosynthesis; dimethylallyl diphosphate from (2E)-4-hydroxy-3-methylbutenyl diphosphate: step 1/1. It participates in isoprenoid biosynthesis; isopentenyl diphosphate biosynthesis via DXP pathway; isopentenyl diphosphate from 1-deoxy-D-xylulose 5-phosphate: step 6/6. Catalyzes the conversion of 1-hydroxy-2-methyl-2-(E)-butenyl 4-diphosphate (HMBPP) into a mixture of isopentenyl diphosphate (IPP) and dimethylallyl diphosphate (DMAPP). Acts in the terminal step of the DOXP/MEP pathway for isoprenoid precursor biosynthesis. This Salmonella paratyphi A (strain ATCC 9150 / SARB42) protein is 4-hydroxy-3-methylbut-2-enyl diphosphate reductase.